The primary structure comprises 131 residues: Small ribosomal subunit protein bS6 (131 aa).

This sequence belongs to the bacterial ribosomal protein bS6 family.

In terms of biological role, binds together with bS18 to 16S ribosomal RNA. In Borrelia hermsii (strain HS1 / DAH), this protein is Small ribosomal subunit protein bS6.